A 124-amino-acid chain; its full sequence is MSDTLRRLGEVLESRKLANGGDPEKSYIARLFHKGDDAILKKIGEEATETVMAAKDARAAGMTDEARGKVVYEVADLWFHTMVLLSHFDLTPDDVVNELARREGLSGLEEKALRKSQARDAAGD.

It belongs to the PRA-PH family.

The protein resides in the cytoplasm. The enzyme catalyses 1-(5-phospho-beta-D-ribosyl)-ATP + H2O = 1-(5-phospho-beta-D-ribosyl)-5'-AMP + diphosphate + H(+). Its pathway is amino-acid biosynthesis; L-histidine biosynthesis; L-histidine from 5-phospho-alpha-D-ribose 1-diphosphate: step 2/9. The polypeptide is Phosphoribosyl-ATP pyrophosphatase (hisE) (Ralstonia nicotianae (strain ATCC BAA-1114 / GMI1000) (Ralstonia solanacearum)).